The sequence spans 156 residues: Small ribosomal subunit protein uS7 (156 aa).

Belongs to the universal ribosomal protein uS7 family. As to quaternary structure, part of the 30S ribosomal subunit. Contacts proteins S9 and S11.

In terms of biological role, one of the primary rRNA binding proteins, it binds directly to 16S rRNA where it nucleates assembly of the head domain of the 30S subunit. Is located at the subunit interface close to the decoding center, probably blocks exit of the E-site tRNA. This is Small ribosomal subunit protein uS7 from Leuconostoc mesenteroides subsp. mesenteroides (strain ATCC 8293 / DSM 20343 / BCRC 11652 / CCM 1803 / JCM 6124 / NCDO 523 / NBRC 100496 / NCIMB 8023 / NCTC 12954 / NRRL B-1118 / 37Y).